The chain runs to 93 residues: Small ribosomal subunit protein uS19 (93 aa).

Belongs to the universal ribosomal protein uS19 family.

In terms of biological role, protein S19 forms a complex with S13 that binds strongly to the 16S ribosomal RNA. The polypeptide is Small ribosomal subunit protein uS19 (Citrifermentans bemidjiense (strain ATCC BAA-1014 / DSM 16622 / JCM 12645 / Bem) (Geobacter bemidjiensis)).